The primary structure comprises 504 residues: Protein nucleotidyltransferase YdiU (504 aa).

Residues G99, G101, R102, K122, D134, G135, R185, and R192 each contribute to the ATP site. D261 serves as the catalytic Proton acceptor. 2 residues coordinate Mg(2+): N262 and D271. D271 is an ATP binding site.

The protein belongs to the SELO family. Mg(2+) serves as cofactor. The cofactor is Mn(2+).

It catalyses the reaction L-seryl-[protein] + ATP = 3-O-(5'-adenylyl)-L-seryl-[protein] + diphosphate. The enzyme catalyses L-threonyl-[protein] + ATP = 3-O-(5'-adenylyl)-L-threonyl-[protein] + diphosphate. The catalysed reaction is L-tyrosyl-[protein] + ATP = O-(5'-adenylyl)-L-tyrosyl-[protein] + diphosphate. It carries out the reaction L-histidyl-[protein] + UTP = N(tele)-(5'-uridylyl)-L-histidyl-[protein] + diphosphate. It catalyses the reaction L-seryl-[protein] + UTP = O-(5'-uridylyl)-L-seryl-[protein] + diphosphate. The enzyme catalyses L-tyrosyl-[protein] + UTP = O-(5'-uridylyl)-L-tyrosyl-[protein] + diphosphate. Functionally, nucleotidyltransferase involved in the post-translational modification of proteins. It can catalyze the addition of adenosine monophosphate (AMP) or uridine monophosphate (UMP) to a protein, resulting in modifications known as AMPylation and UMPylation. The polypeptide is Protein nucleotidyltransferase YdiU (Methylococcus capsulatus (strain ATCC 33009 / NCIMB 11132 / Bath)).